Consider the following 565-residue polypeptide: Transcription factor asqA (565 aa).

The segment at 204–273 (MDTAMAQAVR…HSMPALCIDS (70 aa)) is fungal transcription factor domain.

The protein localises to the nucleus. Its function is as follows. Transcription factor that regulates specifically the 4'-methoxyviridicatin/aspoquinolone biosynthesis cluster. The protein is Transcription factor asqA of Emericella nidulans (strain FGSC A4 / ATCC 38163 / CBS 112.46 / NRRL 194 / M139) (Aspergillus nidulans).